The sequence spans 508 residues: MQRLLAPARRVLQVKRVMQESSLSPAHLLPAAQQRFSTIPPAPLAKTDTWPKDVGILALEVYFPAQYVDQTDLEKFNNVEAGKYTVGLGQTRMGFCSVQEDINSLCLTVVQRLMERTKLPWDAVGRLEVGTETIIDKSKAVKTVLMELFQDSGNTDIEGIDTTNACYGGTASLFNAANWMESSYWDGRYALVVCGDIAVYPSGNARPTGGAGAVAMLIGPKAPLVLEQGLRGTHMENAYDFYKPNLASEYPLVDGKLSIQCYLRALDRCYAAYRRKIQNQWKQAGNNQPFTLDDVQYMIFHTPFCKMVQKSLARLMFNDFLSSSSDKQNNLYKGLEAFKGLKLEETYTNKDVDKALLKASLDMFNKKTKASLYLSTNNGNMYTSSLYGCLASLLSHHSAQELAGSRIGAFSYGSGLAASFFSFRVSKDASPGSPLEKLVSSVSDLPKRLDSRRRMSPEEFTEIMNQREQFYHKVNFSPPGDTSNLFPGTWYLERVDEMHRRKYARRPV.

The transit peptide at 1-37 (MQRLLAPARRVLQVKRVMQESSLSPAHLLPAAQQRFS) directs the protein to the mitochondrion. Lysine 52 is modified (N6-succinyllysine). (3S)-3-hydroxy-3-methylglutaryl-CoA-binding residues include glutamate 80 and alanine 81. Lysine 83 and lysine 118 each carry N6-acetyllysine; alternate. 2 positions are modified to N6-succinyllysine; alternate: lysine 83 and lysine 118. Glutamate 132 serves as the catalytic Proton donor/acceptor. Residues cysteine 166, asparagine 204, and threonine 208 each contribute to the (3S)-3-hydroxy-3-methylglutaryl-CoA site. Catalysis depends on cysteine 166, which acts as the Acyl-thioester intermediate. Lysine 221 is subject to N6-succinyllysine. An N6-acetyllysine modification is found at lysine 243. Residue lysine 256 is modified to N6-acetyllysine; alternate. Residue lysine 256 is modified to N6-succinyllysine; alternate. (3S)-3-hydroxy-3-methylglutaryl-CoA-binding residues include serine 258 and histidine 301. Histidine 301 acts as the Proton donor/acceptor in catalysis. Lysine 306 is modified (N6-acetyllysine). Lysine 310 is a (3S)-3-hydroxy-3-methylglutaryl-CoA binding site. An N6-acetyllysine; alternate mark is found at lysine 310 and lysine 327. N6-succinyllysine; alternate is present on residues lysine 310 and lysine 327. The residue at position 333 (lysine 333) is an N6-succinyllysine. Lysine 342, lysine 350, lysine 354, and lysine 358 each carry N6-acetyllysine; alternate. N6-succinyllysine; alternate is present on residues lysine 342, lysine 350, lysine 354, and lysine 358. The (3S)-3-hydroxy-3-methylglutaryl-CoA site is built by asparagine 380 and serine 414. Lysine 427 is modified (N6-acetyllysine). Residue serine 433 is modified to Phosphoserine. The residue at position 437 (lysine 437) is an N6-acetyllysine. The residue at position 440 (serine 440) is a Phosphoserine. Residue lysine 447 is modified to N6-acetyllysine; alternate. Position 447 is an N6-succinyllysine; alternate (lysine 447). Serine 456 bears the Phosphoserine mark. Residue lysine 473 is modified to N6-acetyllysine; alternate. Lysine 473 carries the N6-succinyllysine; alternate modification. Phosphoserine is present on serine 477.

Belongs to the thiolase-like superfamily. HMG-CoA synthase family. As to quaternary structure, homodimer. Succinylated. Desuccinylated by SIRT5. Succinylation, at least at Lys-83 and Lys-310, inhibits the enzymatic activity. Liver and kidney.

The protein resides in the mitochondrion. It carries out the reaction acetoacetyl-CoA + acetyl-CoA + H2O = (3S)-3-hydroxy-3-methylglutaryl-CoA + CoA + H(+). It functions in the pathway metabolic intermediate biosynthesis; (R)-mevalonate biosynthesis; (R)-mevalonate from acetyl-CoA: step 2/3. Catalyzes the first irreversible step in ketogenesis, condensing acetyl-CoA to acetoacetyl-CoA to form HMG-CoA, which is converted by HMG-CoA reductase (HMGCR) into mevalonate. The protein is Hydroxymethylglutaryl-CoA synthase, mitochondrial (Hmgcs2) of Rattus norvegicus (Rat).